The chain runs to 148 residues: Transcription antitermination protein NusB (148 aa).

This sequence belongs to the NusB family.

Functionally, involved in transcription antitermination. Required for transcription of ribosomal RNA (rRNA) genes. Binds specifically to the boxA antiterminator sequence of the ribosomal RNA (rrn) operons. This is Transcription antitermination protein NusB from Desulfitobacterium hafniense (strain DSM 10664 / DCB-2).